We begin with the raw amino-acid sequence, 806 residues long: Leucine--tRNA ligase (806 aa).

The 'HIGH' region motif lies at 38–48; sequence PYPSGEIHMGH. The 'KMSKS' region motif lies at 572–576; that stretch reads KMSKS. Lys575 provides a ligand contact to ATP.

It belongs to the class-I aminoacyl-tRNA synthetase family.

The protein localises to the cytoplasm. It catalyses the reaction tRNA(Leu) + L-leucine + ATP = L-leucyl-tRNA(Leu) + AMP + diphosphate. The protein is Leucine--tRNA ligase of Helicobacter pylori (strain ATCC 700392 / 26695) (Campylobacter pylori).